The sequence spans 83 residues: ATP synthase subunit c (83 aa).

2 helical membrane-spanning segments follow: residues 10–30 and 52–72; these read IAVA…FGLL and MFIV…IALF.

Belongs to the ATPase C chain family. F-type ATPases have 2 components, F(1) - the catalytic core - and F(0) - the membrane proton channel. F(1) has five subunits: alpha(3), beta(3), gamma(1), delta(1), epsilon(1). F(0) has three main subunits: a(1), b(2) and c(10-14). The alpha and beta chains form an alternating ring which encloses part of the gamma chain. F(1) is attached to F(0) by a central stalk formed by the gamma and epsilon chains, while a peripheral stalk is formed by the delta and b chains.

Its subcellular location is the cell inner membrane. Its function is as follows. F(1)F(0) ATP synthase produces ATP from ADP in the presence of a proton or sodium gradient. F-type ATPases consist of two structural domains, F(1) containing the extramembraneous catalytic core and F(0) containing the membrane proton channel, linked together by a central stalk and a peripheral stalk. During catalysis, ATP synthesis in the catalytic domain of F(1) is coupled via a rotary mechanism of the central stalk subunits to proton translocation. Functionally, key component of the F(0) channel; it plays a direct role in translocation across the membrane. A homomeric c-ring of between 10-14 subunits forms the central stalk rotor element with the F(1) delta and epsilon subunits. This is ATP synthase subunit c from Shewanella baltica (strain OS223).